We begin with the raw amino-acid sequence, 430 residues long: Glial fibrillary acidic protein (430 aa).

The segment at 1 to 31 is disordered; the sequence is MERRRITSARRSYASSETMVRGHGPTRHLGT. Residues 1 to 70 form a head region; that stretch reads MERRRITSAR…KETRASERAE (70 aa). The residue at position 7 (threonine 7) is a Phosphothreonine; by AURKB and ROCK1. The segment covering 9-18 has biased composition (polar residues); that stretch reads ARRSYASSET. Arginine 11 is subject to Omega-N-methylarginine. Position 12 is a phosphoserine (serine 12). At arginine 21 the chain carries Omega-N-methylarginine. Arginine 34 is modified (citrulline). Residue serine 36 is modified to Phosphoserine; by AURKB and ROCK1. Residue threonine 41 is modified to Phosphothreonine. An IF rod domain is found at 67 to 375; sequence ERAEMMELND…KLLEGEENRI (309 aa). Residues 71-102 are coil 1A; it reads MMELNDRFASYIEKVRFLEQQNKALAAELNQL. Serine 80 carries the phosphoserine modification. Positions 103 to 113 are linker 1; it reads RAKEPTKLADV. 2 positions are modified to phosphothreonine: threonine 108 and threonine 148. The segment at 114-212 is coil 1B; the sequence is YQAELRELRL…EEEVRELQEQ (99 aa). Positions 213–228 are linker 12; sequence LAQQQVHVEMDVAKPD. The segment at 229 to 250 is coil 2A; the sequence is LTAALREIRTQYEAVATSNMQE. The linker 2 stretch occupies residues 251 to 254; it reads TEEW. Positions 255–375 are coil 2B; it reads YRSKFADLTD…KLLEGEENRI (121 aa). Serine 267 carries the phosphoserine modification. Arginine 268 is subject to Citrulline. Serine 321 carries the phosphoserine modification. Positions 376–430 are tail; that stretch reads TIPVQTFSNLQIRETSLDTKSVSEGHLKRNIVVKTVEMRDGEVIKESKQEHKDVM. Residue threonine 381 is modified to Phosphothreonine. The residue at position 383 (serine 383) is a Phosphoserine. Citrulline is present on residues arginine 404 and arginine 414.

It belongs to the intermediate filament family. In terms of assembly, interacts with SYNM. As to quaternary structure, interacts with PSEN1 (via N-terminus). Post-translationally, phosphorylated by PKN1. Expressed in the cortex and hippocampus. Expression decreases following acute and chronic corticosterone treatment.

The protein localises to the cytoplasm. Its function is as follows. GFAP, a class-III intermediate filament, is a cell-specific marker that, during the development of the central nervous system, distinguishes astrocytes from other glial cells. In Rattus norvegicus (Rat), this protein is Glial fibrillary acidic protein (Gfap).